Reading from the N-terminus, the 254-residue chain is Alcohol dehydrogenase (254 aa).

10–33 lines the NAD(+) pocket; sequence FVAGLGGIGLDTSREIVKSGPKNL. Serine 138 lines the substrate pocket. The Proton acceptor role is filled by tyrosine 151.

It belongs to the short-chain dehydrogenases/reductases (SDR) family. Homodimer.

It catalyses the reaction a primary alcohol + NAD(+) = an aldehyde + NADH + H(+). The enzyme catalyses a secondary alcohol + NAD(+) = a ketone + NADH + H(+). The protein is Alcohol dehydrogenase (Adh) of Drosophila differens (Fruit fly).